A 155-amino-acid chain; its full sequence is Short-chain-enoyl-CoA hydratase (155 aa).

It belongs to the enoyl-CoA hydratase/isomerase family.

The catalysed reaction is a short-chain (3S)-3-hydroxyacyl-CoA = a short-chain (2E)-enoyl-CoA + H2O. It functions in the pathway lipid metabolism; butanoate metabolism. This chain is Short-chain-enoyl-CoA hydratase (crt), found in Clostridioides difficile (Peptoclostridium difficile).